A 342-amino-acid chain; its full sequence is Ribosomal RNA small subunit methyltransferase H (342 aa).

S-adenosyl-L-methionine contacts are provided by residues 36 to 38, Asp56, Phe82, Asp100, and Gln107; that span reads GGH. Positions 309–342 are disordered; sequence ENRESGMGKGHGAAASRFPTPDSRFPTSPNGDAP. Positions 333–342 are enriched in polar residues; sequence FPTSPNGDAP.

The protein belongs to the methyltransferase superfamily. RsmH family.

It localises to the cytoplasm. It catalyses the reaction cytidine(1402) in 16S rRNA + S-adenosyl-L-methionine = N(4)-methylcytidine(1402) in 16S rRNA + S-adenosyl-L-homocysteine + H(+). Its function is as follows. Specifically methylates the N4 position of cytidine in position 1402 (C1402) of 16S rRNA. This Xanthomonas campestris pv. campestris (strain B100) protein is Ribosomal RNA small subunit methyltransferase H.